The following is a 127-amino-acid chain: Translation initiation factor 5A (127 aa).

K36 is subject to Hypusine.

This sequence belongs to the eIF-5A family.

Its subcellular location is the cytoplasm. Functions by promoting the formation of the first peptide bond. This chain is Translation initiation factor 5A (eif5a), found in Halobacterium salinarum (strain ATCC 700922 / JCM 11081 / NRC-1) (Halobacterium halobium).